The chain runs to 621 residues: Polycystin-2-like protein 2 (621 aa).

Residues 1-31 (MSEATWWYRGGTSKHDLHYRREAEVNTTLEE) are Cytoplasmic-facing. Residues 32–52 (LLLYFIFLINLCILTFGMVNP) form a helical membrane-spanning segment. Over 53-277 (HMYYLNKVMS…SVKLLRYVSY (225 aa)) the chain is Extracellular. N-linked (GlcNAc...) asparagine glycans are attached at residues Asn115 and Asn138. Residues 278–298 (YDYFIASCEVIFCIFLFVFII) traverse the membrane as a helical segment. The Cytoplasmic portion of the chain corresponds to 299–314 (QELRKVNEFKSAYFRS). The chain crosses the membrane as a helical span at residues 315 to 335 (VWNWLEMLLLLLCFLAVSFYA). Topologically, residues 336–360 (YCNMQSFLLLGQLLKNTDSYPDFYF) are extracellular. Residues 361 to 381 (LAYWHIYYNNVIAITIFFAWI) traverse the membrane as a helical segment. The Cytoplasmic portion of the chain corresponds to 382-406 (KIFKFISFNETMSQLSSTLSRCMKD). A helical membrane pass occupies residues 407 to 427 (IVGFAIMFFIIFSAYAQLGFL). At 428–468 (VFGSQVDDFSTFQNSIFAQFRIVLGDFNFAGIQQANWILGP) the chain is on the extracellular side. The helical transmembrane segment at 469-489 (IYFITFIFFVFFVLLNMFLAI) threads the bilayer. Residues 490-621 (INDTYSEVKA…KLNQLMRKLH (132 aa)) are Cytoplasmic-facing. A coiled-coil region spans residues 521 to 551 (NVLEKLRLKKAQAKEEKKMQTTDLAQRARRD).

This sequence belongs to the polycystin family. In terms of assembly, interacts with TRPC1 and TRPC5. Expressed only in testis and heart.

It is found in the membrane. In terms of biological role, exhibits a lower single conductance but no spontaneous channel activity. May function as a regulator of calcium channels or a channel component involving Ca2(+) homeostasis. This chain is Polycystin-2-like protein 2, found in Mus musculus (Mouse).